Here is a 275-residue protein sequence, read N- to C-terminus: Energy-coupling factor transporter ATP-binding protein EcfA1 (275 aa).

One can recognise an ABC transporter domain in the interval 5–240 (IDVKNLSFRY…NDLDQIGLDD (236 aa)). 40-47 (GHNGSGKS) contacts ATP.

It belongs to the ABC transporter superfamily. Energy-coupling factor EcfA family. Forms a stable energy-coupling factor (ECF) transporter complex composed of 2 membrane-embedded substrate-binding proteins (S component), 2 ATP-binding proteins (A component) and 2 transmembrane proteins (T component).

The protein resides in the cell membrane. In terms of biological role, ATP-binding (A) component of a common energy-coupling factor (ECF) ABC-transporter complex. Unlike classic ABC transporters this ECF transporter provides the energy necessary to transport a number of different substrates. The protein is Energy-coupling factor transporter ATP-binding protein EcfA1 of Streptococcus pneumoniae serotype 4 (strain ATCC BAA-334 / TIGR4).